Reading from the N-terminus, the 491-residue chain is Ketol-acid reductoisomerase (NADP(+)) (491 aa).

Positions 15-208 constitute a KARI N-terminal Rossmann domain; the sequence is AQLGKCRFMG…GGHRAGVLES (194 aa). Residues 45 to 48, Arg-68, Arg-76, Ser-78, and 108 to 110 contribute to the NADP(+) site; these read CGAQ and DKQ. The active site involves His-132. Gly-158 contributes to the NADP(+) binding site. KARI C-terminal knotted domains follow at residues 209–344 and 345–484; these read SFVA…TAPQ and FEGK…MTDM. Residues Asp-217, Glu-221, Glu-389, and Glu-393 each coordinate Mg(2+). Residue Ser-414 coordinates substrate.

This sequence belongs to the ketol-acid reductoisomerase family. Requires Mg(2+) as cofactor.

It catalyses the reaction (2R)-2,3-dihydroxy-3-methylbutanoate + NADP(+) = (2S)-2-acetolactate + NADPH + H(+). It carries out the reaction (2R,3R)-2,3-dihydroxy-3-methylpentanoate + NADP(+) = (S)-2-ethyl-2-hydroxy-3-oxobutanoate + NADPH + H(+). Its pathway is amino-acid biosynthesis; L-isoleucine biosynthesis; L-isoleucine from 2-oxobutanoate: step 2/4. The protein operates within amino-acid biosynthesis; L-valine biosynthesis; L-valine from pyruvate: step 2/4. In terms of biological role, involved in the biosynthesis of branched-chain amino acids (BCAA). Catalyzes an alkyl-migration followed by a ketol-acid reduction of (S)-2-acetolactate (S2AL) to yield (R)-2,3-dihydroxy-isovalerate. In the isomerase reaction, S2AL is rearranged via a Mg-dependent methyl migration to produce 3-hydroxy-3-methyl-2-ketobutyrate (HMKB). In the reductase reaction, this 2-ketoacid undergoes a metal-dependent reduction by NADPH to yield (R)-2,3-dihydroxy-isovalerate. This is Ketol-acid reductoisomerase (NADP(+)) from Salmonella heidelberg (strain SL476).